Consider the following 1381-residue polypeptide: Hepatocyte growth factor receptor (1381 aa).

Residues 1–24 (MKAPAVLAPGILMLLFTLVQRSNG) form the signal peptide. Over 25-932 (ECKEALAKSE…VIVQPDQNFT (908 aa)) the chain is Extracellular. One can recognise a Sema domain in the interval 27 to 515 (KEALAKSEMN…TGKKITKIPL (489 aa)). A glycan (N-linked (GlcNAc...) asparagine) is linked at N45. 4 disulfide bridges follow: C95/C101, C98/C160, C133/C141, and C172/C175. N106 carries N-linked (GlcNAc...) asparagine glycosylation. N149 carries N-linked (GlcNAc...) asparagine glycosylation. A glycan (N-linked (GlcNAc...) asparagine) is linked at N202. Cystine bridges form between C298–C363 and C385–C397. 2 N-linked (GlcNAc...) asparagine glycosylation sites follow: N399 and N405. 4 disulfides stabilise this stretch: C520–C538, C526–C561, C529–C545, and C541–C551. 3 IPT/TIG domains span residues 563 to 655 (PAIY…FSYV), 657 to 739 (PIIT…FSYR), and 742 to 836 (PIVY…LIYV). T582 carries an O-linked (Man) threonine glycan. N-linked (GlcNAc...) asparagine glycosylation is found at N607 and N635. O-linked (Man) threonine glycans are attached at residues T676 and T761. Residues N785, N879, and N930 are each glycosylated (N-linked (GlcNAc...) asparagine). Residues 933–955 (GLIAGVVSISIALLLLLGLFLWL) traverse the membrane as a helical segment. Residues 956 to 1381 (KKRKQIKDLG…EDNADDEVDT (426 aa)) lie on the Cytoplasmic side of the membrane. Phosphoserine is present on S966. T977 carries the post-translational modification Phosphothreonine. Residues S990, S997, and S1000 each carry the phosphoserine modification. Y1003 carries the phosphotyrosine modification. The region spanning 1078–1345 (VHFNEVIGRG…RISAIFSTFI (268 aa)) is the Protein kinase domain. Residues 1084–1092 (IGRGHFGCV) and K1110 each bind ATP. Catalysis depends on D1204, which acts as the Proton acceptor. The interval 1212-1381 (LDEKFTVKVA…EDNADDEVDT (170 aa)) is interaction with RANBP9. Y1230 is modified (phosphotyrosine). A phosphotyrosine; by autocatalysis mark is found at Y1234 and Y1235. T1289 is modified (phosphothreonine). The interaction with MUC20 stretch occupies residues 1320–1359 (WHPKAEMRPSFSELVSRISAIFSTFIGEHYVHVNATYVNV). Phosphotyrosine; by autocatalysis is present on residues Y1349 and Y1356. Y1365 is modified (phosphotyrosine).

Belongs to the protein kinase superfamily. Tyr protein kinase family. In terms of assembly, heterodimer made of an alpha chain (50 kDa) and a beta chain (145 kDa) which are disulfide linked. Binds PLXNB1. Interacts when phosphorylated with downstream effectors including STAT3, PIK3R1, SRC, PCLG1, GRB2 and GAB1. Interacts with SPSB1, SPSB2 and SPSB4. Interacts with INPP5D/SHIP1. When phosphorylated at Tyr-1356, interacts with INPPL1/SHIP2. Interacts with RANBP9 and RANBP10, as well as SPSB1, SPSB2, SPSB3 and SPSB4. SPSB1 binding occurs in the presence and in the absence of HGF, however HGF treatment has a positive effect on this interaction. Interacts with MUC20; prevents interaction with GRB2 and suppresses hepatocyte growth factor-induced cell proliferation. Interacts with GRB10. Interacts with PTPN1 and PTPN2. Interacts with HSP90AA1 and HSP90AB1; the interaction suppresses MET kinase activity. Interacts with tensin TNS3. Interacts (when phosphorylated) with tensin TNS4 (via SH2 domain); the interaction increases MET protein stability by inhibiting MET endocytosis and subsequent lysosomal degradation. As to quaternary structure, (Microbial infection) Immunoprecipitates with L.monocytogenes InlB. InlB probably dimerizes upon binding to MET, which encourages subsequent dimerization of MET. In terms of processing, autophosphorylated in response to ligand binding on Tyr-1234 and Tyr-1235 in the kinase domain leading to further phosphorylation of Tyr-1349 and Tyr-1356 in the C-terminal multifunctional docking site. Dephosphorylated by PTPRJ at Tyr-1349 and Tyr-1365. Dephosphorylated by PTPN1 and PTPN2. Ubiquitinated. Ubiquitination by CBL regulates the receptor stability and activity through proteasomal degradation. Post-translationally, O-mannosylation of IPT/TIG domains by TMEM260 is required for protein maturation. O-mannosylated residues are composed of single mannose glycans that are not elongated or modified. In terms of processing, (Microbial infection) Tyrosine phosphorylation is stimulated by L.monocytogenes InlB.

It is found in the membrane. It catalyses the reaction L-tyrosyl-[protein] + ATP = O-phospho-L-tyrosyl-[protein] + ADP + H(+). In its inactive state, the C-terminal tail interacts with the catalytic domain and inhibits the kinase activity. Upon ligand binding, the C-terminal tail is displaced and becomes phosphorylated, thus increasing the kinase activity. In terms of biological role, receptor tyrosine kinase that transduces signals from the extracellular matrix into the cytoplasm by binding to hepatocyte growth factor/HGF ligand. Regulates many physiological processes including proliferation, scattering, morphogenesis and survival. Ligand binding at the cell surface induces autophosphorylation of MET on its intracellular domain that provides docking sites for downstream signaling molecules. Following activation by ligand, interacts with the PI3-kinase subunit PIK3R1, PLCG1, SRC, GRB2, STAT3 or the adapter GAB1. Recruitment of these downstream effectors by MET leads to the activation of several signaling cascades including the RAS-ERK, PI3 kinase-AKT, or PLCgamma-PKC. The RAS-ERK activation is associated with the morphogenetic effects while PI3K/AKT coordinates prosurvival effects. During embryonic development, MET signaling plays a role in gastrulation, development and migration of muscles and neuronal precursors, angiogenesis and kidney formation. In adults, participates in wound healing as well as organ regeneration and tissue remodeling. Also promotes differentiation and proliferation of hematopoietic cells. (Microbial infection) Acts as a receptor for Listeria monocytogenes internalin InlB, mediating entry of the pathogen into cells. This chain is Hepatocyte growth factor receptor (MET), found in Chlorocebus aethiops (Green monkey).